The primary structure comprises 241 residues: MDIALMKNMIKAGVHFGHQTRYWNPKMKPFIFGIKNKVHIINLEKTLPLFRLAINELKKTIKFNGKILFVGTKRSASAAIKSIALSCNQFYVNHRWLGGMLTNWKTVRQSINKLKDLEKQSLDGTFDKLTKKEVLLRIRLLNKLENSLGGIKNMGGLPDAIFIIDTAYEHIAIREANHLGIPVFAIVDTNSSPDGVNYIIPGNDDAIRSINLYLNILSDELSKCYKEKKESIILKNRLKEQ.

Belongs to the universal ribosomal protein uS2 family.

This Buchnera aphidicola subsp. Cinara cedri (strain Cc) protein is Small ribosomal subunit protein uS2.